Here is a 174-residue protein sequence, read N- to C-terminus: Calcium-binding protein F (174 aa).

4 EF-hand domains span residues 9–44 (KIFQ…KMDG), 60–83 (VDMD…EAKK), 92–127 (AALA…NGHT), and 133–162 (DQVL…RRID). Residues Asp-22, Asn-24, Asp-26, Ser-28, and Asp-33 each coordinate Ca(2+). Ca(2+) is bound by residues Asp-105, Asp-107, Asp-109, Lys-111, Glu-116, Asp-140, Asp-142, Asp-144, Cys-146, and Glu-151.

The polypeptide is Calcium-binding protein F (cbpF) (Dictyostelium discoideum (Social amoeba)).